Consider the following 726-residue polypeptide: Long-chain-fatty-acid--CoA ligase ACSBG1 (726 aa).

The interval 1–39 is disordered; it reads MPDSRAAPQESLLDASLGTTQENVGTSSLTDGQTLSKEP. Over residues 17–36 the composition is skewed to polar residues; sequence LGTTQENVGTSSLTDGQTLS. Residue Ser36 is modified to Phosphoserine. The residue at position 641 (Tyr641) is a Phosphotyrosine. The tract at residues 707–726 is disordered; sequence SKQGSSLPGFSLRWQTGASS.

This sequence belongs to the ATP-dependent AMP-binding enzyme family. Bubblegum subfamily.

It localises to the cytoplasm. The protein localises to the cytoplasmic vesicle. The protein resides in the microsome. It is found in the endoplasmic reticulum. Its subcellular location is the cell membrane. The catalysed reaction is a long-chain fatty acid + ATP + CoA = a long-chain fatty acyl-CoA + AMP + diphosphate. It carries out the reaction (E)-hexadec-2-enoate + ATP + CoA = (2E)-hexadecenoyl-CoA + AMP + diphosphate. It catalyses the reaction hexadecanoate + ATP + CoA = hexadecanoyl-CoA + AMP + diphosphate. Catalyzes the conversion of fatty acids such as long-chain and very long-chain fatty acids to their active form acyl-CoAs for both synthesis of cellular lipids, and degradation via beta-oxidation. Can activate diverse saturated, monosaturated and polyunsaturated fatty acids. The sequence is that of Long-chain-fatty-acid--CoA ligase ACSBG1 from Bos taurus (Bovine).